We begin with the raw amino-acid sequence, 194 residues long: Orotate phosphoribosyltransferase (194 aa).

Position 116–124 (116–124 (EDIVTTGLS)) interacts with 5-phospho-alpha-D-ribose 1-diphosphate. Residues T120 and R148 each contribute to the orotate site.

The protein belongs to the purine/pyrimidine phosphoribosyltransferase family. PyrE subfamily. In terms of assembly, homodimer. Mg(2+) serves as cofactor.

It catalyses the reaction orotidine 5'-phosphate + diphosphate = orotate + 5-phospho-alpha-D-ribose 1-diphosphate. Its pathway is pyrimidine metabolism; UMP biosynthesis via de novo pathway; UMP from orotate: step 1/2. Functionally, catalyzes the transfer of a ribosyl phosphate group from 5-phosphoribose 1-diphosphate to orotate, leading to the formation of orotidine monophosphate (OMP). This is Orotate phosphoribosyltransferase from Phenylobacterium zucineum (strain HLK1).